A 765-amino-acid chain; its full sequence is DNA topoisomerase 1 (765 aa).

Basic and acidic residues predominate over residues 1 to 23 (MSGDHLHNDSQIEADFRLNDSHK). The disordered stretch occupies residues 1 to 199 (MSGDHLHNDS…NKKKKPKKEE (199 aa)). Serine 2 carries the N-acetylserine modification. 2 positions are modified to phosphoserine: serine 2 and serine 10. Basic residues predominate over residues 24–39 (HKDKHKDREHRHKEHK). The segment covering 40 to 108 (KEKDREKSKH…DAKIKKEKEN (69 aa)) has biased composition (basic and acidic residues). Serine 57 is modified (phosphoserine). Residue lysine 101 forms a Glycyl lysine isopeptide (Lys-Gly) (interchain with G-Cter in SUMO2) linkage. A Glycyl lysine isopeptide (Lys-Gly) (interchain with G-Cter in SUMO); alternate cross-link involves residue lysine 103. Lysine 103 participates in a covalent cross-link: Glycyl lysine isopeptide (Lys-Gly) (interchain with G-Cter in SUMO2); alternate. Position 112 is a phosphoserine (serine 112). A Glycyl lysine isopeptide (Lys-Gly) (interchain with G-Cter in SUMO); alternate cross-link involves residue lysine 117. Lysine 117 participates in a covalent cross-link: Glycyl lysine isopeptide (Lys-Gly) (interchain with G-Cter in SUMO2); alternate. Lysine 117 participates in a covalent cross-link: Glycyl lysine isopeptide (Lys-Gly) (interchain with G-Cter in SUMO1); alternate. Positions 129-166 (PKEDIKPLKRPRDEDDADYKPKKIKTEDTKKEKKRKLE) are enriched in basic and acidic residues. Residues lysine 134 and lysine 148 each participate in a glycyl lysine isopeptide (Lys-Gly) (interchain with G-Cter in SUMO2) cross-link. Lysine 153 participates in a covalent cross-link: Glycyl lysine isopeptide (Lys-Gly) (interchain with G-Cter in SUMO); alternate. Lysine 153 is covalently cross-linked (Glycyl lysine isopeptide (Lys-Gly) (interchain with G-Cter in SUMO2); alternate). Glycyl lysine isopeptide (Lys-Gly) (interchain with G-Cter in SUMO2) cross-links involve residues lysine 158 and lysine 164. Lysine 172 participates in a covalent cross-link: Glycyl lysine isopeptide (Lys-Gly) (interchain with G-Cter in SUMO2); alternate. Residue lysine 172 is modified to N6-acetyllysine; alternate. The span at 179-199 (KDKDKKVPEPDNKKKKPKKEE) shows a compositional bias: basic and acidic residues. A Glycyl lysine isopeptide (Lys-Gly) (interchain with G-Cter in SUMO2) cross-link involves residue lysine 204. Lysine 280 is subject to N6-acetyllysine. Lysine 336 is covalently cross-linked (Glycyl lysine isopeptide (Lys-Gly) (interchain with G-Cter in SUMO2)). Interaction with DNA stretches follow at residues 425 to 426 (KY) and 488 to 493 (RAGNEK). Residues 432–765 (SSRIKGEKDW…IDMADEDYEF (334 aa)) form the Topo IB-type catalytic domain. Serine 506 is modified (phosphoserine; by CK2). Residue lysine 549 forms a Glycyl lysine isopeptide (Lys-Gly) (interchain with G-Cter in SUMO2) linkage. Residues 585-587 (TAK) are interaction with DNA. Residues lysine 642, lysine 700, and lysine 712 each participate in a glycyl lysine isopeptide (Lys-Gly) (interchain with G-Cter in SUMO2) cross-link. The O-(3'-phospho-DNA)-tyrosine intermediate role is filled by tyrosine 723.

This sequence belongs to the type IB topoisomerase family. In terms of assembly, monomer. Interacts with ERCC6. Interacts with TPRN; TPRN interacts with a number of DNA damage response proteins, is recruited to sites of DNA damage and may play a role in DNA damage repair. (Microbial infection) Interacts with SV40 Large T antigen; this interactions allows viral DNA replication. Sumoylated. Lys-117 is the main site of sumoylation. Sumoylation plays a role in partitioning TOP1 between nucleoli and nucleoplasm. Levels are dramatically increased on camptothecin (CPT) treatment. Post-translationally, phosphorylation at Ser-506 by CK2 increases binding to supercoiled DNA and sensitivity to camptothecin. In terms of tissue distribution, endothelial cells.

The protein resides in the nucleus. The protein localises to the nucleolus. Its subcellular location is the nucleoplasm. It catalyses the reaction ATP-independent breakage of single-stranded DNA, followed by passage and rejoining.. With respect to regulation, specifically inhibited by camptothecin (CPT), a plant alkaloid with antitumor activity. Functionally, releases the supercoiling and torsional tension of DNA introduced during the DNA replication and transcription by transiently cleaving and rejoining one strand of the DNA duplex. Introduces a single-strand break via transesterification at a target site in duplex DNA. The scissile phosphodiester is attacked by the catalytic tyrosine of the enzyme, resulting in the formation of a DNA-(3'-phosphotyrosyl)-enzyme intermediate and the expulsion of a 5'-OH DNA strand. The free DNA strand then rotates around the intact phosphodiester bond on the opposing strand, thus removing DNA supercoils. Finally, in the religation step, the DNA 5'-OH attacks the covalent intermediate to expel the active-site tyrosine and restore the DNA phosphodiester backbone. Regulates the alternative splicing of tissue factor (F3) pre-mRNA in endothelial cells. Involved in the circadian transcription of the core circadian clock component BMAL1 by altering the chromatin structure around the ROR response elements (ROREs) on the BMAL1 promoter. The sequence is that of DNA topoisomerase 1 (TOP1) from Homo sapiens (Human).